The following is a 2628-amino-acid chain: Hemagglutinin A (2628 aa).

An N-terminal signal peptide occupies residues M1–A24. Peptidase C25-like regions lie at residues A25–P539, G540–P995, G996–P1451, G1452–P1907, and I2074–K2628. Disordered stretches follow at residues W493 to S512, S520 to G546, K944 to G1002, K1400 to G1458, K1856 to F1881, K1890 to G1909, and S2336 to G2358. The span at P496–T508 shows a compositional bias: low complexity.

It belongs to the peptidase C25 family.

Functionally, agglutinates erythrocytes. This is Hemagglutinin A (hagA) from Porphyromonas gingivalis (Bacteroides gingivalis).